The primary structure comprises 257 residues: Ditrans,polycis-undecaprenyl-diphosphate synthase ((2E,6E)-farnesyl-diphosphate specific) (257 aa).

Aspartate 34 is a catalytic residue. Position 34 (aspartate 34) interacts with Mg(2+). Residues glycine 35 to arginine 38, tryptophan 39, arginine 47, and histidine 51 contribute to the substrate site. The active-site Proton acceptor is the asparagine 82. Residues tryptophan 83, arginine 85, arginine 201, and arginine 207–serine 209 each bind substrate. Glutamate 220 lines the Mg(2+) pocket.

It belongs to the UPP synthase family. In terms of assembly, homodimer. Mg(2+) serves as cofactor.

It catalyses the reaction 8 isopentenyl diphosphate + (2E,6E)-farnesyl diphosphate = di-trans,octa-cis-undecaprenyl diphosphate + 8 diphosphate. In terms of biological role, catalyzes the sequential condensation of isopentenyl diphosphate (IPP) with (2E,6E)-farnesyl diphosphate (E,E-FPP) to yield (2Z,6Z,10Z,14Z,18Z,22Z,26Z,30Z,34E,38E)-undecaprenyl diphosphate (di-trans,octa-cis-UPP). UPP is the precursor of glycosyl carrier lipid in the biosynthesis of bacterial cell wall polysaccharide components such as peptidoglycan and lipopolysaccharide. This chain is Ditrans,polycis-undecaprenyl-diphosphate synthase ((2E,6E)-farnesyl-diphosphate specific), found in Francisella tularensis subsp. tularensis (strain SCHU S4 / Schu 4).